A 697-amino-acid polypeptide reads, in one-letter code: Elongation factor G (697 aa).

The 276-residue stretch at E10–L285 folds into the tr-type G domain. GTP contacts are provided by residues A19–T26, D83–H87, and N137–D140.

It belongs to the TRAFAC class translation factor GTPase superfamily. Classic translation factor GTPase family. EF-G/EF-2 subfamily.

It localises to the cytoplasm. Catalyzes the GTP-dependent ribosomal translocation step during translation elongation. During this step, the ribosome changes from the pre-translocational (PRE) to the post-translocational (POST) state as the newly formed A-site-bound peptidyl-tRNA and P-site-bound deacylated tRNA move to the P and E sites, respectively. Catalyzes the coordinated movement of the two tRNA molecules, the mRNA and conformational changes in the ribosome. The sequence is that of Elongation factor G from Pediococcus pentosaceus (strain ATCC 25745 / CCUG 21536 / LMG 10740 / 183-1w).